A 490-amino-acid polypeptide reads, in one-letter code: MSDVQVHQLYIHGRYVEATSGKTFNSINPANGEIIATLQQASEQDIEAAVKSAQQGQKIWAAMTAMERSRILRRAVDILRERNDELARLETLDTGKAYSETSTVDIVTGADVLEYYAGLATAIQGEQVPLRESSFFYTRREPLGVVAGIGAWNYPIQIALWKSAPALAAGNAMIFKPSETTPLTALKLAEIYTEAGLPDGVFNVVQGAGREIGQWLTEHPVIEKISFTGGVETGKKVMASAAGSTLKEVTMELGGKSPLIICEDADLNRAADIAVMANFFSSGQVCTNGTRVFVPKSRLADFEKAVVERVKRIRVGDPMAEDTNFGPLTSFPHMEKVLSFIESGKQQGAKVLIGGGRATEGELAKGAYVLPTVFSDCTDQMAIVQEEIFGPVMSILSYETEEEVIQRANDTTFGLAAGVVTQDISRAHRIIHQIEAGICWINTWGESPAEMPVGGYKQSGVGRENGLTTLGHYTRIKSIQVELGDYQSIF.

Positions 26, 27, and 93 each coordinate K(+). Position 150–152 (150–152) interacts with NAD(+); the sequence is GAW. The active-site Charge relay system is the Lys162. NAD(+)-binding positions include 176–179 and 230–233; these read KPSE and GVET. Leu246 lines the K(+) pocket. Residue Glu252 is the Proton acceptor of the active site. 3 residues coordinate NAD(+): Gly254, Cys286, and Glu387. Cys286 serves as the catalytic Nucleophile. Cys286 bears the Cysteine sulfenic acid (-SOH) mark. K(+) is bound by residues Lys457 and Gly460. Glu464 functions as the Charge relay system in the catalytic mechanism.

The protein belongs to the aldehyde dehydrogenase family. In terms of assembly, dimer of dimers. The cofactor is K(+).

The enzyme catalyses betaine aldehyde + NAD(+) + H2O = glycine betaine + NADH + 2 H(+). It participates in amine and polyamine biosynthesis; betaine biosynthesis via choline pathway; betaine from betaine aldehyde: step 1/1. Functionally, involved in the biosynthesis of the osmoprotectant glycine betaine. Catalyzes the irreversible oxidation of betaine aldehyde to the corresponding acid. In Acinetobacter baumannii (strain AB307-0294), this protein is Betaine aldehyde dehydrogenase.